The sequence spans 1029 residues: MDRMASSMKQVSNPLPKVLSRRGVGAGMEAAERESFERTQTVSVNKAINTQEVAVKEKHARTCILGTHHEKGAQTFWSVVNRLPLSSNAMLCWKFCHVFHKLLRDGHPNVLKDSLRYKNELSDMSRMWGHLSEGYGQLCSIYLKLLRTRMEYHTKNPRFPGNLQMSDRQLDEAGESDVNNFFQLTVEMFDYLECELNLFQTVFNSLDMSRSVSVTTAGQCRLAPLIQVILDCSHLYDYTVKLLFKLHSCLPADTLQGHRDRFMEQFTKLKDLFQRSSNLQYFKRLIQIPQLPENPPNFLRASALSEHISPVVVIPAEVSSPDSEPVLEKDDLMDMDASQQTLFDNKFDDVFGSSLSSDPFNFNNQNGVNKDEKDHLIERLYREISGLTGQLDNMKIESQRAMLQLKGRVSELEAELAEQQHLGRQAMDDCEFLRTELDELKRQREDTEKAQRSLTEIERKAQANEQRYSKLKEKYSELVQNHADLLRKNAEVTKQVSVARQAQVDLEREKKELADSFARTQEQQDVLENLKHELATSRQELQVLHSNLETSAQSEAKWLTQIAELEKEQGSLATVAAQREEELSALRDQLESTQIKLAGAQESMCQQVKDQRKTLLAGIRKAAEREIQEALSQLEEPTLISCAGSTDHLLSKVSSVSSCLEQLEKNGSQYLACPEDISELLHSITLLAHLTGDTIIQGSATSLRAPPEPADSLTEACRQYGRETLAYLSSLEEEGTMENADVTALRNCLSRVKTLGEELLPRGLDIKQEELGDLVDKEMAATSAAIEAATTRIEEILSKSRAGDTGVKLEVNERILGSCTSLMQAIKVLVVASKDLQKEIVESGRGTASPKEFYAKNSRWTEGLISASKAVGWGATIMVDAADLVVQGKGKFEELMVCSREIAASTAQLVAASKVKANKGSLNLTQLQQASRGVNQATAAVVASTISGKSQIEETDSMDFSSMTLTQIKRQEMDSQVRVLELENDLQKERQKLGELRKKHYELAGVAEGWEEGTEASPSTVQEAIPDKE.

The 129-residue stretch at 32-160 (ERESFERTQT…EYHTKNPRFP (129 aa)) folds into the ENTH domain. Ser-338 carries the post-translational modification Phosphoserine. A coiled-coil region spans residues 375-636 (HLIERLYREI…IQEALSQLEE (262 aa)). The pDED stretch occupies residues 410 to 491 (SELEAELAEQ…HADLLRKNAE (82 aa)). The I/LWEQ domain occupies 763 to 1004 (GLDIKQEELG…ELRKKHYELA (242 aa)). Residues 859–916 (RWTEGLISASKAVGWGATIMVDAADLVVQGKGKFEELMVCSREIAASTAQLVAASKVK) are important for actin binding. Positions 1009–1029 (GWEEGTEASPSTVQEAIPDKE) are disordered.

It belongs to the SLA2 family. Homodimer. Binds actin. Binds HTT (via N-terminus). This interaction is restricted to the brain. Binds to IFT57. In normal conditions, it poorly interacts with IFT57, HIP1 being strongly associated with HTT. However, in mutant HTT proteins with a long poly-Gln region, interaction between HTT and HIP1 is inhibited, promoting the interaction between HIP1 and IFT57. Interacts with CLTB (via N-terminus). Interacts (via coiled coil domain) with AR. Interacts with AP2A1, AP2A2, CLTC and HIP1R. Interacts with GRIA1, GRIN2A and GRIN2B. As to expression, most abundantly expressed in brain. In brain, expressed in cortical tissue, hippocampus, the molecular layer of the cerebellum and olfactory bulb. Also expressed in spinal cord and bone marrow (at protein level). Expressed in reproductive tissues.

It is found in the cytoplasm. The protein resides in the nucleus. It localises to the endomembrane system. The protein localises to the cytoplasmic vesicle. Its subcellular location is the clathrin-coated vesicle membrane. Functionally, plays a role in clathrin-mediated endocytosis and trafficking. Involved in regulating AMPA receptor trafficking in the central nervous system in an NMDA-dependent manner. Regulates presynaptic nerve terminal activity. Enhances androgen receptor (AR)-mediated transcription. May act as a proapoptotic protein that induces cell death by acting through the intrinsic apoptosis pathway. Binds 3-phosphoinositides (via ENTH domain). May act through the ENTH domain to promote cell survival by stabilizing receptor tyrosine kinases following ligand-induced endocytosis. May play a functional role in the cell filament networks. May be required for differentiation, proliferation, and/or survival of somatic and germline progenitors. This is Huntingtin-interacting protein 1 from Mus musculus (Mouse).